Here is a 104-residue protein sequence, read N- to C-terminus: Large ribosomal subunit protein uL24 (104 aa).

This sequence belongs to the universal ribosomal protein uL24 family. As to quaternary structure, part of the 50S ribosomal subunit.

In terms of biological role, one of two assembly initiator proteins, it binds directly to the 5'-end of the 23S rRNA, where it nucleates assembly of the 50S subunit. One of the proteins that surrounds the polypeptide exit tunnel on the outside of the subunit. In Caulobacter sp. (strain K31), this protein is Large ribosomal subunit protein uL24.